We begin with the raw amino-acid sequence, 303 residues long: B1 kinase (303 aa).

It belongs to the protein kinase superfamily. Ser/Thr protein kinase family. Poxviruses subfamily. As to quaternary structure, interacts with host JIP1; this interaction increases the amount of MAPK bound to JIP1 and subsequently increases the activity of transcription factors, such as JUN, that respond to these complexes. Interacts with protein OPG198; this interaction inhibits the repressive activity of OPG198 pseudokinase on viral replication factory formation. Mg(2+) serves as cofactor. Post-translationally, autophosphorylated.

Its subcellular location is the virion. The protein localises to the host cytoplasm. It carries out the reaction L-seryl-[protein] + ATP = O-phospho-L-seryl-[protein] + ADP + H(+). The enzyme catalyses L-threonyl-[protein] + ATP = O-phospho-L-threonyl-[protein] + ADP + H(+). In terms of biological role, essential serine/threonine-protein kinase that plays different role in the viral life cycle. Phosphorylates the host small ribosomal protein RACK1 thereby customizing the ribosomes to a state optimal for viral mRNAs (which contain poly-A leaders) but not for host mRNAs. Facilitates viral DNA replication by inhibiting host BANF1, a cellular host defense responsive to foreign DNA. Phosphorylates host BANF1 on serine and threonine residues; this leads to BANF1 relocalization to the cytoplasm, loss of dimerization and impaired DNA binding activity. Indeed, BANF1 activity depends on its DNA-binding property which is blocked by VPK1-mediated phosphorylation. Required for viral intermediate genes expression, probably by inhibiting host BANF1. Modulates cellular responses via host JUN by two different mechanisms, either by direct phosphorylation or by modulation of upstream JIP1-MAPK complexes. Seems to participate in the accumulation/processing of late proteins and thus in virion maturation. In addition, inhibits B12 repressive activity on viral DNA replication via a phosphorylation-dependent mechanism. This is B1 kinase (OPG187) from Cynomys gunnisoni (Gunnison's prairie dog).